The chain runs to 203 residues: MKVLIAYYSMYGHIHRMAEAVAEGAREVAGAEVLIRRVPETLPADVLEKMGAVETQKKMAQIPVCTIGELADADAIIFGTPTRFGNMCGQMRQFLDATGGLWMKGSLVGKLGSVFTSSATQHGGQESTILSFHITLLHQGMVVVGLPYAFQGQMRNDEIIGGSPYGASTIAGTQGERSPSENDLAAARYQGKHVASIAARLAR.

Residues 3 to 194 (VLIAYYSMYG…AAARYQGKHV (192 aa)) form the Flavodoxin-like domain. Residues 9–14 (SMYGHI) and 82–84 (TRF) contribute to the FMN site. Position 11 (Tyr-11) interacts with NAD(+). Substrate is bound at residue Trp-102. Residues 117–123 (SSATQHG) and His-138 contribute to the FMN site.

This sequence belongs to the WrbA family. Requires FMN as cofactor.

It catalyses the reaction a quinone + NADH + H(+) = a quinol + NAD(+). The catalysed reaction is a quinone + NADPH + H(+) = a quinol + NADP(+). This chain is NAD(P)H dehydrogenase (quinone), found in Geotalea uraniireducens (strain Rf4) (Geobacter uraniireducens).